Here is a 210-residue protein sequence, read N- to C-terminus: Protoporphyrinogen IX oxidase (210 aa).

Transmembrane regions (helical) follow at residues 22–42 (WFKA…FYLV), 74–94 (YNII…GLIF), 103–123 (GWLH…FYCG), 141–161 (FRAL…LAVF), and 165–185 (LPLD…AASI). Position 27 (H27) interacts with heme. K108 is a binding site for heme.

Belongs to the HemJ family. As to quaternary structure, homodimer. Can also form higher oligomers, most probably tetramers. Interacts with Sll1106, however it is unlikely that Sll1106 is required for PPO function. It depends on heme b as a cofactor.

It is found in the cell membrane. It catalyses the reaction protoporphyrinogen IX + 3 A = protoporphyrin IX + 3 AH2. Its pathway is porphyrin-containing compound metabolism; protoporphyrin-IX biosynthesis; protoporphyrin-IX from protoporphyrinogen-IX: step 1/1. In terms of biological role, catalyzes the oxidation of protoporphyrinogen IX to protoporphyrin IX. Is involved in the biosynthesis of tetrapyrrole molecules like heme and chlorophyll. Does not use oxygen or artificial electron acceptors such as menadione or benzoquinone. Is functionally coupled with coproporphyrinogen III oxidase (CPO). Is essential for growth. In Synechocystis sp. (strain ATCC 27184 / PCC 6803 / Kazusa), this protein is Protoporphyrinogen IX oxidase.